The sequence spans 266 residues: Glutamate racemase (266 aa).

Substrate contacts are provided by residues 9–10 (DS) and 41–42 (YG). Cys73 serves as the catalytic Proton donor/acceptor. Position 74–75 (74–75 (NS)) interacts with substrate. Cys183 acts as the Proton donor/acceptor in catalysis. 184–185 (TH) contributes to the substrate binding site.

This sequence belongs to the aspartate/glutamate racemases family.

The catalysed reaction is L-glutamate = D-glutamate. Its pathway is cell wall biogenesis; peptidoglycan biosynthesis. Its function is as follows. Provides the (R)-glutamate required for cell wall biosynthesis. The chain is Glutamate racemase from Shewanella loihica (strain ATCC BAA-1088 / PV-4).